Here is a 187-residue protein sequence, read N- to C-terminus: NADH-quinone oxidoreductase subunit B (187 aa).

4 residues coordinate [4Fe-4S] cluster: Cys-51, Cys-52, Cys-117, and Cys-149.

Belongs to the complex I 20 kDa subunit family. NDH-1 is composed of 14 different subunits. Subunits NuoB, C, D, E, F, and G constitute the peripheral sector of the complex. [4Fe-4S] cluster is required as a cofactor.

It localises to the cell inner membrane. The catalysed reaction is a quinone + NADH + 5 H(+)(in) = a quinol + NAD(+) + 4 H(+)(out). In terms of biological role, NDH-1 shuttles electrons from NADH, via FMN and iron-sulfur (Fe-S) centers, to quinones in the respiratory chain. The immediate electron acceptor for the enzyme in this species is believed to be ubiquinone. Couples the redox reaction to proton translocation (for every two electrons transferred, four hydrogen ions are translocated across the cytoplasmic membrane), and thus conserves the redox energy in a proton gradient. The polypeptide is NADH-quinone oxidoreductase subunit B (Nitratidesulfovibrio vulgaris (strain DSM 19637 / Miyazaki F) (Desulfovibrio vulgaris)).